We begin with the raw amino-acid sequence, 2116 residues long: Non-structural polyprotein p200 (2116 aa).

Residues 36 to 49 form a required for efficient proteolysis and P150-P90 interaction region; that stretch reads EVRDVVTAAQKRAI. An Alphavirus-like MT domain is found at 57-247; sequence VFTQMQVSDH…TRPCTTRIYQ (191 aa). Positions 715-779 are disordered; it reads GQLAATSPPP…PVPPTTAEPA (65 aa). Composition is skewed to pro residues over residues 721-730 and 745-775; these read SPPPGDPPPP and TPPP…PPTT. Short sequence motifs (pxxPxR; class II SH3-binding) lie at residues 727-732, 747-752, and 761-766; these read PPPPRR, PPAPVR, and PPAPPR. The Macro domain occupies 806–985; it reads SDIVESYARA…LTHASVLVGA (180 aa). Positions 992–1031 are disordered; the sequence is VSPPPTEPLASCPAGDPGRPAQRSASPPATPLGDATAPEP. Residues 1000–1301 enclose the Peptidase C27 domain; it reads LASCPAGDPG…WLAVPLSRGG (302 aa). The active-site For cysteine protease activity is the C1152. The tract at residues 1152-1183 is interaction with host CALM1; the sequence is CWLRAAANVAQAARACGAYTSAGCPKCAYGRA. The Zn(2+) site is built by C1175, C1178, C1227, and H1273. Residues 1193–1228 are EF-hand-like; it reads FAALSQWWSASHADASPDGTGDPLDPLMETVGCACS. The active-site For cysteine protease activity is H1273. One can recognise a (+)RNA virus helicase ATP-binding domain in the interval 1320–1468; it reads EVRRLGDDAM…VPDRWPTGRS (149 aa). 1352-1359 lines the a ribonucleoside 5'-triphosphate pocket; the sequence is MAAGAGKT. In terms of domain architecture, (+)RNA virus helicase C-terminal spans 1469–1609; it reads RHTWRFPDCW…ELKEVPAGID (141 aa). The interval 1700–1900 is involved in P150-P90 interaction; sequence YRAGEDGSTL…VELEISAALL (201 aa). The RdRp catalytic domain maps to 1870-1981; sequence TNAIEVDFTE…FLPEGARNAA (112 aa). A Human RB1 binding motif is present at residues 1902-1906; it reads LPCAE.

In terms of assembly, interacts with RNA-directed RNA polymerase p90. Interacts with host CALM1; this interaction is necessary for the protease activity and viral infectivity. Interacts with host C1QBP. Interacts with the capsid protein. Interacts with human RB1/retinoblastoma protein. Interacts with protease/methyltransferase p150. The cofactor is Zn(2+). Specific enzymatic cleavage by its own cysteine protease yield mature proteins p150 and p90.

The protein resides in the host membrane. It is found in the host cytoplasm. It localises to the host perinuclear region. It carries out the reaction RNA(n) + a ribonucleoside 5'-triphosphate = RNA(n+1) + diphosphate. The enzyme catalyses a ribonucleoside 5'-triphosphate + H2O = a ribonucleoside 5'-diphosphate + phosphate + H(+). It catalyses the reaction ATP + H2O = ADP + phosphate + H(+). Probable principal replicase for the negative-strand DNA, which replicates the 40S (+) genomic RNA into (-) antigenomic RNA. It cannot replicate the (-) into (+) until cleaved into p150 and p90 mature proteins. In terms of biological role, protease that cleaves the precursor polyprotein into two mature products. Together with RNA-directed RNA polymerase p90, replicates the 40S genomic and antigenomic RNA by recognizing replications specific signals. The heterodimer P150/p90 is probably the principal replicase for positive-strand genomic RNA and the 24S subgenomic RNA, which codes for structural proteins. Responsible for the mRNA-capping of the viral mRNAs. This function is necessary since all viral RNAs are synthesized in the cytoplasm, and host capping enzymes are restricted to the nucleus. Forms fibers late in the infection that may be involved in cell-to-cell spread of the virus RNA in the absence of virus particle formation. Functionally, together with protease/methyltransferase p150, replicates the 40S genomic and antigenomic RNA by recognizing replications specific signals. The heterodimer P150/p90 is probably the principal replicase for positive-strand genomic RNA and the 24S subgenomic RNA, which codes for structural proteins. A helicase activity is probably also present. This chain is Non-structural polyprotein p200, found in Rubella virus (strain M33) (RUBV).